A 430-amino-acid polypeptide reads, in one-letter code: Threonine synthase (430 aa).

Lys-108 carries the post-translational modification N6-(pyridoxal phosphate)lysine.

The protein belongs to the threonine synthase family. Pyridoxal 5'-phosphate is required as a cofactor.

It catalyses the reaction O-phospho-L-homoserine + H2O = L-threonine + phosphate. It functions in the pathway amino-acid biosynthesis; L-threonine biosynthesis; L-threonine from L-aspartate: step 5/5. Catalyzes the gamma-elimination of phosphate from L-phosphohomoserine and the beta-addition of water to produce L-threonine. In Buchnera aphidicola subsp. Baizongia pistaciae (strain Bp), this protein is Threonine synthase (thrC).